Reading from the N-terminus, the 540-residue chain is Glucose-6-phosphate isomerase (540 aa).

Residue glutamate 346 is the Proton donor of the active site. Active-site residues include histidine 377 and lysine 505.

This sequence belongs to the GPI family.

The protein localises to the cytoplasm. It carries out the reaction alpha-D-glucose 6-phosphate = beta-D-fructose 6-phosphate. The protein operates within carbohydrate biosynthesis; gluconeogenesis. It participates in carbohydrate degradation; glycolysis; D-glyceraldehyde 3-phosphate and glycerone phosphate from D-glucose: step 2/4. Its function is as follows. Catalyzes the reversible isomerization of glucose-6-phosphate to fructose-6-phosphate. This chain is Glucose-6-phosphate isomerase, found in Francisella philomiragia subsp. philomiragia (strain ATCC 25017 / CCUG 19701 / FSC 153 / O#319-036).